Consider the following 705-residue polypeptide: Solute carrier family 12 member 8 (705 aa).

Helical transmembrane passes span 38-58 (FGTW…VVLF), 69-89 (GVLL…ITVL), 92-112 (IGVA…ISSV), 121-141 (VGLL…TGFA), 159-179 (ISVA…KWII), 181-201 (LQLL…VGSF), 232-252 (FFTV…GFNM), 268-288 (LAAV…LGAV), 306-326 (LVGF…CMGG), 368-388 (LVTM…VVTI), and 390-410 (FMLT…AHCG). Residues 472 to 512 (ESRQLGSREGNNPKNQKRKGKKGAKQTLQDSFLLDPGSPLS) are disordered. The span at 486–495 (NQKRKGKKGA) shows a compositional bias: basic residues. 2 consecutive transmembrane segments (helical) span residues 587–607 (WVSL…QWLY) and 612–632 (MGVA…LYLG).

It belongs to the SLC12A transporter family.

Its subcellular location is the membrane. In terms of biological role, cation/chloride cotransporter that may play a role in the control of keratinocyte proliferation. This is Solute carrier family 12 member 8 (Slc12a8) from Mus musculus (Mouse).